We begin with the raw amino-acid sequence, 429 residues long: Protein S-Myc (429 aa).

Phosphotyrosine; by Tyr-kinases is present on Tyr-36. The segment at 301-325 is disordered; it reads PLPYAEDARPLKKPRSQDPLGPLKC. Residues 346–398 enclose the bHLH domain; the sequence is ERRRNHNRMERQRRDIMRSSFLNLRDLVPELVHNEKAAKVVILKKATEYIHTL. The interval 398–419 is leucine-zipper; sequence LQTDESKLLVEREKLYERKQQL.

As to quaternary structure, efficient DNA binding requires dimerization with another bHLH protein.

It localises to the nucleus. Its function is as follows. Has apoptosis-inducing activity. The chain is Protein S-Myc (Mycs) from Rattus norvegicus (Rat).